A 96-amino-acid polypeptide reads, in one-letter code: DNA-directed RNA polymerase subunit Rpo11 (96 aa).

It belongs to the archaeal Rpo11/eukaryotic RPB11/RPC19 RNA polymerase subunit family. Part of the RNA polymerase complex.

Its subcellular location is the cytoplasm. The catalysed reaction is RNA(n) + a ribonucleoside 5'-triphosphate = RNA(n+1) + diphosphate. In terms of biological role, DNA-dependent RNA polymerase (RNAP) catalyzes the transcription of DNA into RNA using the four ribonucleoside triphosphates as substrates. In Methanococcus maripaludis (strain C5 / ATCC BAA-1333), this protein is DNA-directed RNA polymerase subunit Rpo11.